We begin with the raw amino-acid sequence, 163 residues long: Cyanate hydratase (163 aa).

Residues R103, E106, and S129 contribute to the active site.

The protein belongs to the cyanase family.

It carries out the reaction cyanate + hydrogencarbonate + 3 H(+) = NH4(+) + 2 CO2. Functionally, catalyzes the reaction of cyanate with bicarbonate to produce ammonia and carbon dioxide. In Talaromyces marneffei (strain ATCC 18224 / CBS 334.59 / QM 7333) (Penicillium marneffei), this protein is Cyanate hydratase.